Consider the following 236-residue polypeptide: Phosphoribosylaminoimidazole-succinocarboxamide synthase (236 aa).

Belongs to the SAICAR synthetase family.

The enzyme catalyses 5-amino-1-(5-phospho-D-ribosyl)imidazole-4-carboxylate + L-aspartate + ATP = (2S)-2-[5-amino-1-(5-phospho-beta-D-ribosyl)imidazole-4-carboxamido]succinate + ADP + phosphate + 2 H(+). It participates in purine metabolism; IMP biosynthesis via de novo pathway; 5-amino-1-(5-phospho-D-ribosyl)imidazole-4-carboxamide from 5-amino-1-(5-phospho-D-ribosyl)imidazole-4-carboxylate: step 1/2. The chain is Phosphoribosylaminoimidazole-succinocarboxamide synthase from Cellvibrio japonicus (strain Ueda107) (Pseudomonas fluorescens subsp. cellulosa).